The following is a 219-amino-acid chain: MHSLSKSAMFRKGLVYSFPIVMAYIPVAFTFGVLARTLGFSEVEAMLASLLIFAGASQFALITLYSQSLLSAIFIPIFLNLRHIIYSSIIAQKLKLRFPHISAFGLTDEVFAVSVNSAENERFLLGLELGSYSAWVGGTALGVLAGSTLILDRDVYSALVFSISALFLVLLLPNLKGRHVRAAVSGGAVALAFHLLNLTSVGIIAAALAGPLLSGWDGE.

Helical transmembrane passes span 14–34 (LVYSFPIVMAYIPVAFTFGVL), 37–57 (TLGFSEVEAMLASLLIFAGAS), 123–143 (FLLGLELGSYSAWVGGTALGV), 155–175 (VYSALVFSISALFLVLLLPNL), and 189–209 (VALAFHLLNLTSVGIIAAALA).

The protein belongs to the AzlC family.

Its subcellular location is the cell membrane. This is an uncharacterized protein from Archaeoglobus fulgidus (strain ATCC 49558 / DSM 4304 / JCM 9628 / NBRC 100126 / VC-16).